We begin with the raw amino-acid sequence, 364 residues long: Fructose-bisphosphate aldolase B (364 aa).

Ala-2 carries the N-acetylalanine modification. Lys-13 is modified (N6-succinyllysine). Ser-36 is modified (phosphoserine). Thr-39 is subject to Phosphothreonine. A beta-D-fructose 1,6-bisphosphate-binding site is contributed by Arg-43. Ser-89 is modified (phosphoserine). A Phosphothreonine modification is found at Thr-119. N6-succinyllysine is present on Lys-121. A Phosphoserine modification is found at Ser-132. Residue Glu-188 is the Proton acceptor of the active site. At Ser-206 the chain carries Phosphoserine. The active-site Schiff-base intermediate with dihydroxyacetone-P is Lys-230. Residues Ser-272, Ser-276, Ser-299, and Ser-301 each carry the phosphoserine modification. Residue 272–274 coordinates beta-D-fructose 1,6-bisphosphate; sequence SGG. A beta-D-fructose 1,6-bisphosphate-binding site is contributed by Arg-304. Ser-309 is subject to Phosphoserine. The residue at position 317 (Lys-317) is an N6-succinyllysine.

Belongs to the class I fructose-bisphosphate aldolase family. As to quaternary structure, homotetramer. Interacts with BBS1, BBS2, BBS4 and BBS7. Forms a ternary complex with G6PD and TP53; this interaction is direct.

It localises to the cytoplasm. It is found in the cytosol. The protein localises to the cytoskeleton. The protein resides in the microtubule organizing center. Its subcellular location is the centrosome. It localises to the centriolar satellite. It carries out the reaction beta-D-fructose 1,6-bisphosphate = D-glyceraldehyde 3-phosphate + dihydroxyacetone phosphate. It catalyses the reaction beta-D-fructose 1-phosphate = D-glyceraldehyde + dihydroxyacetone phosphate. It functions in the pathway carbohydrate degradation; glycolysis; D-glyceraldehyde 3-phosphate and glycerone phosphate from D-glucose: step 4/4. The protein operates within carbohydrate biosynthesis; gluconeogenesis. It participates in carbohydrate metabolism; fructose metabolism. In terms of biological role, catalyzes the aldol cleavage of fructose 1,6-biphosphate to form two triosephosphates dihydroxyacetone phosphate and D-glyceraldehyde 3-phosphate in glycolysis as well as the reverse stereospecific aldol addition reaction in gluconeogenesis. In fructolysis, metabolizes fructose 1-phosphate derived from the phosphorylation of dietary fructose by fructokinase into dihydroxyacetone phosphate and D-glyceraldehyde. Acts as an adapter independently of its enzymatic activity, exerts a tumor suppressor role by stabilizing the ternary complex with G6PD and TP53 to inhibit G6PD activity and keep oxidative pentose phosphate metabolism in check. The protein is Fructose-bisphosphate aldolase B of Mus musculus (Mouse).